The primary structure comprises 303 residues: Protein-lysine N-methyltransferase rrg1 (303 aa).

Residues tryptophan 117, 143 to 145 (GAG), aspartate 165, tryptophan 198, and serine 221 contribute to the S-adenosyl-L-methionine site.

This sequence belongs to the class I-like SAM-binding methyltransferase superfamily. METTL21 family.

The protein localises to the cytoplasm. Its subcellular location is the nucleus. Its function is as follows. S-adenosyl-L-methionine-dependent protein-lysine N-methyltransferase that methylates elongation factor 2 and elongation factor 3A. The sequence is that of Protein-lysine N-methyltransferase rrg1 from Schizosaccharomyces pombe (strain 972 / ATCC 24843) (Fission yeast).